Here is a 985-residue protein sequence, read N- to C-terminus: Rho guanine nucleotide exchange factor 2 (985 aa).

The segment at 1 to 32 (MSRIESLTRARIDRSKEQATKTREKEKMKEAK) is disordered. Residues 39-86 (GHLFTTISVSGMTMCYACNKSITAKEALICPTCNVTIHNRCKDTLANC) form a Phorbol-ester/DAG-type zinc finger. Serine 109, serine 122, serine 129, serine 133, and serine 137 each carry phosphoserine. Residues 131–161 (RQSLLGSRRGLSSLSLAKSVSTTNIAGHFND) are interaction with DYNLT1. At serine 143 the chain carries Phosphoserine; by PAK4. 5 positions are modified to phosphoserine: serine 151, serine 163, serine 172, serine 174, and serine 177. A DH domain is found at 236 to 433 (KKQDVIYELI…KELLSNVDQD (198 aa)). Lysine 354 is subject to N6-acetyllysine. Positions 473 to 572 (KLIHDGCLLW…WIRVIQQSVR (100 aa)) constitute a PH domain. Residues 591–615 (LRRIKTKLQQKNQALVELLQMNVEL) are a coiled coil. 2 positions are modified to phosphoserine: serine 646 and serine 649. The residue at position 680 (threonine 680) is a Phosphothreonine; by MAPK1 or MAPK3. Phosphoserine occurs at positions 692, 710, and 781. Residue threonine 795 is modified to Phosphothreonine. A coiled-coil region spans residues 797 to 866 (EKQATELALL…RQLAALGQNE (70 aa)). Phosphoserine is present on serine 885. Disordered regions lie at residues 890-909 (DALY…DRLD) and 918-985 (HRPF…ASES). The residue at position 893 (tyrosine 893) is a Phosphotyrosine. Serine 895 carries the phosphoserine; by PAK4 modification. Positions 919 to 938 (RPFDDREAQELGSPEDRLQD) are enriched in basic and acidic residues. Phosphoserine occurs at positions 931, 939, and 940. Acidic residues predominate over residues 940-949 (SDPDTCSEEE). Threonine 944 carries the phosphothreonine modification. A phosphoserine mark is found at serine 946, serine 951, serine 952, serine 955, and serine 959.

Found in a complex composed at least of ARHGEF2, NOD2 and RIPK2. Interacts with RIPK2; the interaction mediates tyrosine phosphorylation of RIPK2 by Src kinase CSK. Interacts with RIPK1 and RIPK3. Interacts with YWHAZ/14-3-3 zeta; when phosphorylated at Ser-885. Interacts with the kinases PAK4, AURKA and MAPK1. Interacts with RHOA and RAC1. Interacts with NOD1. Interacts (via the N- terminal zinc finger) with CAPN6 (via domain II). Interacts with DYNLT1. Phosphorylation of Ser-885 by PAK1 induces binding to protein YWHAZ, promoting its relocation to microtubules and the inhibition of its activity. Phosphorylated by AURKA and CDK1 during mitosis, which negatively regulates its activity. Phosphorylation by MAPK1 or MAPK3 increases nucleotide exchange activity. Phosphorylation by PAK4 releases GEF-H1 from the microtubules. Phosphorylated on serine, threonine and tyrosine residues in a RIPK2-dependent manner.

The protein resides in the cytoplasm. The protein localises to the cytoskeleton. It localises to the cell junction. It is found in the tight junction. Its subcellular location is the golgi apparatus. The protein resides in the spindle. The protein localises to the cytoplasmic vesicle. In terms of biological role, activates Rho-GTPases by promoting the exchange of GDP for GTP. May be involved in epithelial barrier permeability, cell motility and polarization, dendritic spine morphology, antigen presentation, leukemic cell differentiation, cell cycle regulation, innate immune response, and cancer. Binds Rac-GTPases, but does not seem to promote nucleotide exchange activity toward Rac-GTPases. May stimulate instead the cortical activity of Rac. Inactive toward CDC42, TC10, or Ras-GTPases. Forms an intracellular sensing system along with NOD1 for the detection of microbial effectors during cell invasion by pathogens. Involved in innate immune signaling transduction pathway promoting cytokine IL6/interleukin-6 and TNF-alpha secretion in macrophage upon stimulation by bacterial peptidoglycans; acts as a signaling intermediate between NOD2 receptor and RIPK2 kinase. Contributes to the tyrosine phosphorylation of RIPK2 through Src tyrosine kinase leading to NF-kappaB activation by NOD2. Overexpression activates Rho-, but not Rac-GTPases, and increases paracellular permeability. Involved in neuronal progenitor cell division and differentiation. Involved in the migration of precerebellar neurons. The polypeptide is Rho guanine nucleotide exchange factor 2 (Arhgef2) (Rattus norvegicus (Rat)).